The sequence spans 167 residues: Translationally-controlled tumor protein homolog (167 aa).

Residues 1-167 form the TCTP domain; the sequence is MIIYTDIISG…WKHGVKAEKI (167 aa).

It belongs to the TCTP family.

It localises to the cytoplasm. The protein resides in the cytoskeleton. In terms of biological role, involved in protein synthesis. Involved in microtubule stabilization. This Kluyveromyces lactis (strain ATCC 8585 / CBS 2359 / DSM 70799 / NBRC 1267 / NRRL Y-1140 / WM37) (Yeast) protein is Translationally-controlled tumor protein homolog.